The following is a 617-amino-acid chain: Dihydroxy-acid dehydratase (617 aa).

Aspartate 81 serves as a coordination point for Mg(2+). Residue cysteine 122 participates in [2Fe-2S] cluster binding. The Mg(2+) site is built by aspartate 123 and lysine 124. Lysine 124 is subject to N6-carboxylysine. Cysteine 195 is a binding site for [2Fe-2S] cluster. Glutamate 491 is a Mg(2+) binding site. Serine 517 serves as the catalytic Proton acceptor.

It belongs to the IlvD/Edd family. As to quaternary structure, homodimer. [2Fe-2S] cluster serves as cofactor. The cofactor is Mg(2+).

The catalysed reaction is (2R)-2,3-dihydroxy-3-methylbutanoate = 3-methyl-2-oxobutanoate + H2O. It carries out the reaction (2R,3R)-2,3-dihydroxy-3-methylpentanoate = (S)-3-methyl-2-oxopentanoate + H2O. It participates in amino-acid biosynthesis; L-isoleucine biosynthesis; L-isoleucine from 2-oxobutanoate: step 3/4. Its pathway is amino-acid biosynthesis; L-valine biosynthesis; L-valine from pyruvate: step 3/4. Functions in the biosynthesis of branched-chain amino acids. Catalyzes the dehydration of (2R,3R)-2,3-dihydroxy-3-methylpentanoate (2,3-dihydroxy-3-methylvalerate) into 2-oxo-3-methylpentanoate (2-oxo-3-methylvalerate) and of (2R)-2,3-dihydroxy-3-methylbutanoate (2,3-dihydroxyisovalerate) into 2-oxo-3-methylbutanoate (2-oxoisovalerate), the penultimate precursor to L-isoleucine and L-valine, respectively. This is Dihydroxy-acid dehydratase from Nitrosococcus oceani (strain ATCC 19707 / BCRC 17464 / JCM 30415 / NCIMB 11848 / C-107).